A 250-amino-acid polypeptide reads, in one-letter code: Kallikrein-9 (250 aa).

An N-terminal signal peptide occupies residues 1–15 (MKLGLLCALLSLLAG). A Peptidase S1 domain is found at 23 to 249 (AIGAEECRPN…YLDWIQEIME (227 aa)). Intrachain disulfides connect Cys-29–Cys-164, Cys-48–Cys-64, Cys-136–Cys-238, Cys-143–Cys-210, Cys-175–Cys-189, and Cys-200–Cys-225. Residues His-63 and Asp-111 each act as charge relay system in the active site. N-linked (GlcNAc...) asparagine glycans are attached at residues Asn-131 and Asn-166. The active-site Charge relay system is Ser-204. Asn-211 carries an N-linked (GlcNAc...) asparagine glycan.

Belongs to the peptidase S1 family. Kallikrein subfamily. Skin, thymus, trachea, cerebellum and spinal cord.

The protein resides in the secreted. This is Kallikrein-9 (KLK9) from Homo sapiens (Human).